The primary structure comprises 138 residues: Small ribosomal subunit protein uS11c (138 aa).

A disordered region spans residues 1-24 (MTKPIPRIGSRRNGRIGSRKSGRR). Residues 9 to 24 (GSRRNGRIGSRKSGRR) show a composition bias toward basic residues.

Belongs to the universal ribosomal protein uS11 family. As to quaternary structure, part of the 30S ribosomal subunit.

It localises to the plastid. It is found in the chloroplast. This Liriodendron tulipifera (Tuliptree) protein is Small ribosomal subunit protein uS11c.